The sequence spans 39 residues: Cytochrome b559 subunit beta (39 aa).

A helical membrane pass occupies residues 14–30 (WLTVHGLAVPTVSFLGS). His-18 lines the heme pocket.

Belongs to the PsbE/PsbF family. In terms of assembly, heterodimer of an alpha subunit and a beta subunit. PSII is composed of 1 copy each of membrane proteins PsbA, PsbB, PsbC, PsbD, PsbE, PsbF, PsbH, PsbI, PsbJ, PsbK, PsbL, PsbM, PsbT, PsbX, PsbY, PsbZ, Psb30/Ycf12, at least 3 peripheral proteins of the oxygen-evolving complex and a large number of cofactors. It forms dimeric complexes. The cofactor is heme b.

The protein localises to the plastid. It localises to the chloroplast thylakoid membrane. Functionally, this b-type cytochrome is tightly associated with the reaction center of photosystem II (PSII). PSII is a light-driven water:plastoquinone oxidoreductase that uses light energy to abstract electrons from H(2)O, generating O(2) and a proton gradient subsequently used for ATP formation. It consists of a core antenna complex that captures photons, and an electron transfer chain that converts photonic excitation into a charge separation. In Lactuca sativa (Garden lettuce), this protein is Cytochrome b559 subunit beta.